The following is a 154-amino-acid chain: Myoglobin (154 aa).

The region spanning 2–148 is the Globin domain; the sequence is GLSDGEWQLV…FRNDIAAKYK (147 aa). Phosphoserine is present on S4. Position 65 (H65) interacts with nitrite. H65 contributes to the O2 binding site. A Phosphothreonine modification is found at T68. Residue H94 coordinates heme b.

The protein belongs to the globin family. As to quaternary structure, monomeric.

It is found in the cytoplasm. It localises to the sarcoplasm. It carries out the reaction Fe(III)-heme b-[protein] + nitric oxide + H2O = Fe(II)-heme b-[protein] + nitrite + 2 H(+). The enzyme catalyses H2O2 + AH2 = A + 2 H2O. In terms of biological role, monomeric heme protein which primary function is to store oxygen and facilitate its diffusion within muscle tissues. Reversibly binds oxygen through a pentacoordinated heme iron and enables its timely and efficient release as needed during periods of heightened demand. Depending on the oxidative conditions of tissues and cells, and in addition to its ability to bind oxygen, it also has a nitrite reductase activity whereby it regulates the production of bioactive nitric oxide. Under stress conditions, like hypoxia and anoxia, it also protects cells against reactive oxygen species thanks to its pseudoperoxidase activity. This is Myoglobin (MB) from Lagostomus maximus (Plains viscacha).